A 243-amino-acid chain; its full sequence is MAQPLCEPRSESWILSPAGRQPPMPSDGNSVCSPAWSSDPWDGAQASSPAPPCARPARRAGTPGRRGTHGSRLGSGQRQSASEREKLRMRTLARALHELRRFLPPSVAPTGQNLTKIETLRLAIRYIGHLSAVLGLSEDNLRRQRHAVSPRGCPLCPDSDLAQSQSLGPRLSPAVCSGVSWGSPPAYPRPRVAAESWDPSFLYAETASQERQEMEPSPSSPLFSSDMLALLETWTPPQEWPPA.

Residues 1-86 (MAQPLCEPRS…QRQSASEREK (86 aa)) are disordered. Positions 27–36 (DGNSVCSPAW) are enriched in polar residues. In terms of domain architecture, bHLH spans 76 to 130 (GQRQSASEREKLRMRTLARALHELRRFLPPSVAPTGQNLTKIETLRLAIRYIGHL). A CPLCP motif is present at residues 153–157 (CPLCP). The segment at 204–228 (AETASQERQEMEPSPSSPLFSSDML) is disordered.

As to expression, no expression was detected in adult tissues except the testis. Expression in the testis was regulated developmentally; expressed 2 weeks after birth, and increases, reaching the full expression level in mature testes.

The protein resides in the nucleus. In terms of biological role, transcription factor. Plays a role in the epithelialization of somitic mesoderm and in the development of cardiac mesoderm. Defines the rostrocaudal patterning of the somites by participating in distinct Notch pathways. The protein is Mesoderm posterior protein 1 (Mesp1) of Mus musculus (Mouse).